Here is a 591-residue protein sequence, read N- to C-terminus: Isocitrate dehydrogenase kinase/phosphatase (591 aa).

ATP is bound by residues 322 to 328 and Lys-343; that span reads APGIRGL. Asp-378 is a catalytic residue.

This sequence belongs to the AceK family.

The protein localises to the cytoplasm. The catalysed reaction is L-seryl-[isocitrate dehydrogenase] + ATP = O-phospho-L-seryl-[isocitrate dehydrogenase] + ADP + H(+). Its function is as follows. Bifunctional enzyme which can phosphorylate or dephosphorylate isocitrate dehydrogenase (IDH) on a specific serine residue. This is a regulatory mechanism which enables bacteria to bypass the Krebs cycle via the glyoxylate shunt in response to the source of carbon. When bacteria are grown on glucose, IDH is fully active and unphosphorylated, but when grown on acetate or ethanol, the activity of IDH declines drastically concomitant with its phosphorylation. The polypeptide is Isocitrate dehydrogenase kinase/phosphatase (Aromatoleum aromaticum (strain DSM 19018 / LMG 30748 / EbN1) (Azoarcus sp. (strain EbN1))).